Consider the following 294-residue polypeptide: dTDP-4-dehydrorhamnose reductase (294 aa).

NADH contacts are provided by residues Gly-11 to Leu-13, Asp-38 to Ile-39, and Ala-62 to Thr-64. NADPH contacts are provided by residues Gln-12–Leu-13, Asp-38–Ile-39, and Ala-62–Thr-64. Residue Thr-103–Asp-104 participates in dTDP-beta-L-rhamnose binding. 2 residues coordinate NADH: Tyr-127 and Lys-131. NADPH-binding residues include Tyr-127 and Lys-131. Catalysis depends on Tyr-127, which acts as the Proton donor/acceptor. Trp-152 serves as a coordination point for dTDP-beta-L-rhamnose.

The protein belongs to the dTDP-4-dehydrorhamnose reductase family. Homodimer. Mg(2+) is required as a cofactor.

It catalyses the reaction dTDP-beta-L-rhamnose + NADP(+) = dTDP-4-dehydro-beta-L-rhamnose + NADPH + H(+). It participates in carbohydrate biosynthesis; dTDP-L-rhamnose biosynthesis. The protein operates within bacterial outer membrane biogenesis; LPS O-antigen biosynthesis. In terms of biological role, involved in the biosynthesis of the dTDP-L-rhamnose which is an important component of lipopolysaccharide (LPS). Catalyzes the reduction of dTDP-6-deoxy-L-lyxo-4-hexulose to yield dTDP-L-rhamnose. In Aggregatibacter actinomycetemcomitans (Actinobacillus actinomycetemcomitans), this protein is dTDP-4-dehydrorhamnose reductase.